Consider the following 671-residue polypeptide: DNA ligase (671 aa).

NAD(+) is bound by residues 32–36, 81–82, and Glu113; these read DAEYD and SL. The active-site N6-AMP-lysine intermediate is Lys115. Residues Arg136, Glu173, Lys290, and Lys314 each coordinate NAD(+). 4 residues coordinate Zn(2+): Cys408, Cys411, Cys426, and Cys432. In terms of domain architecture, BRCT spans 593–671; the sequence is EIDSPFAGKT…EAEMLRLLGS (79 aa).

The protein belongs to the NAD-dependent DNA ligase family. LigA subfamily. Requires Mg(2+) as cofactor. Mn(2+) is required as a cofactor.

It carries out the reaction NAD(+) + (deoxyribonucleotide)n-3'-hydroxyl + 5'-phospho-(deoxyribonucleotide)m = (deoxyribonucleotide)n+m + AMP + beta-nicotinamide D-nucleotide.. Its function is as follows. DNA ligase that catalyzes the formation of phosphodiester linkages between 5'-phosphoryl and 3'-hydroxyl groups in double-stranded DNA using NAD as a coenzyme and as the energy source for the reaction. It is essential for DNA replication and repair of damaged DNA. The chain is DNA ligase from Shigella dysenteriae serotype 1 (strain Sd197).